The sequence spans 270 residues: Type III pantothenate kinase (270 aa).

6–13 (DAGNTNIV) lines the ATP pocket. 107–110 (GADR) provides a ligand contact to substrate. Aspartate 109 (proton acceptor) is an active-site residue. K(+) is bound at residue aspartate 129. Threonine 132 is a binding site for ATP. Residue threonine 184 coordinates substrate.

The protein belongs to the type III pantothenate kinase family. In terms of assembly, homodimer. Requires NH4(+) as cofactor. K(+) is required as a cofactor.

It is found in the cytoplasm. It carries out the reaction (R)-pantothenate + ATP = (R)-4'-phosphopantothenate + ADP + H(+). The protein operates within cofactor biosynthesis; coenzyme A biosynthesis; CoA from (R)-pantothenate: step 1/5. Its function is as follows. Catalyzes the phosphorylation of pantothenate (Pan), the first step in CoA biosynthesis. The sequence is that of Type III pantothenate kinase from Gluconobacter oxydans (strain 621H) (Gluconobacter suboxydans).